Consider the following 199-residue polypeptide: Inner membrane protein E199L (199 aa).

A helical transmembrane segment spans residues 150 to 170; that stretch reads INVMNHPFLTLILIILILIII.

The protein belongs to the asfivirus E199L family. Interacts with host PYCR2; this interaction results in autophagy activation. Post-translationally, contains intramolecular disulfide bonds.

The protein localises to the virion membrane. The protein resides in the host membrane. In terms of biological role, essential for viral fusion with host endosomal membrane and core release. Not required for virus morphogenesis and egress. Induces complete autophagy through the interaction with and down-regulation of host PYCR2. The chain is Inner membrane protein E199L from Ornithodoros (relapsing fever ticks).